Here is a 248-residue protein sequence, read N- to C-terminus: MTRYKAIISYDGSGFYGYQIQPNARTVQAEIEKALKKMHKGKNVRITASGRTDTGVHAKGQVIHFDSDLDITADKFQKALQVMTPFDISFLTVDEAPADFHARFGTVGKEYRYIVKRTKIFDPFSRNFALHYPYELDIAKMKLASECLIGEHDFTSFCSARTERDSKVRTLYSIDFYEEDEETLVIAFQGNGFLYNMVRILTGTLLDAGQGRISSEDITEALLARDRQKLISKTAPPQGLYLWRVDYE.

D53 functions as the Nucleophile in the catalytic mechanism. Y111 lines the substrate pocket.

The protein belongs to the tRNA pseudouridine synthase TruA family. Homodimer.

The catalysed reaction is uridine(38/39/40) in tRNA = pseudouridine(38/39/40) in tRNA. Functionally, formation of pseudouridine at positions 38, 39 and 40 in the anticodon stem and loop of transfer RNAs. This Listeria welshimeri serovar 6b (strain ATCC 35897 / DSM 20650 / CCUG 15529 / CIP 8149 / NCTC 11857 / SLCC 5334 / V8) protein is tRNA pseudouridine synthase A.